Reading from the N-terminus, the 162-residue chain is Nucleotide-binding protein ACIAD3137 (162 aa).

Belongs to the YajQ family.

Nucleotide-binding protein. The chain is Nucleotide-binding protein ACIAD3137 from Acinetobacter baylyi (strain ATCC 33305 / BD413 / ADP1).